Here is a 473-residue protein sequence, read N- to C-terminus: Adenosylhomocysteinase (473 aa).

Substrate is bound by residues threonine 64, aspartate 139, and glutamate 199. 200–202 (TTT) lines the NAD(+) pocket. Residues lysine 229 and aspartate 233 each contribute to the substrate site. Residues asparagine 234, 263 to 268 (GYGDVG), glutamate 286, asparagine 321, 342 to 344 (IGH), and asparagine 387 contribute to the NAD(+) site.

This sequence belongs to the adenosylhomocysteinase family. It depends on NAD(+) as a cofactor.

It localises to the cytoplasm. The enzyme catalyses S-adenosyl-L-homocysteine + H2O = L-homocysteine + adenosine. It functions in the pathway amino-acid biosynthesis; L-homocysteine biosynthesis; L-homocysteine from S-adenosyl-L-homocysteine: step 1/1. In terms of biological role, may play a key role in the regulation of the intracellular concentration of adenosylhomocysteine. The chain is Adenosylhomocysteinase from Paraburkholderia phymatum (strain DSM 17167 / CIP 108236 / LMG 21445 / STM815) (Burkholderia phymatum).